Here is a 310-residue protein sequence, read N- to C-terminus: MRRILTFFLGSIIIGLSIIISPSSSFAYPFWAQQNYENPREATGKLVCANCHLAKMTTQVEVPQSVGADSVFKAAVKIPYKPGTEEIGADGSKVPLQVGAVVMLPDGFKLAPQDRWTEDIKEETKGVYFTQYSEEKDNIILVGPLPGDQNKEIVFPILSPDPAKDKNIHFGKYSINVGGNRGRGQVYPTGEKSNNSIFTSTAAGLISTIEPNKDGGTNITIQTESGEAIIEEIPVGPSLVVKEGQTIDIGIPLTSDPNVGGFGQLDTEIVLQSPARVIGLIAFFAGVALTQILLVLKKKQVEKVQAAEGI.

Positions 1-27 are cleaved as a signal peptide; that stretch reads MRRILTFFLGSIIIGLSIIISPSSSFA. The heme site is built by Tyr-28, Cys-48, Cys-51, and His-52. Residues 277-297 traverse the membrane as a helical segment; the sequence is VIGLIAFFAGVALTQILLVLK.

It belongs to the cytochrome f family. As to quaternary structure, the 4 large subunits of the cytochrome b6-f complex are cytochrome b6, subunit IV (17 kDa polypeptide, PetD), cytochrome f and the Rieske protein, while the 4 small subunits are PetG, PetL, PetM and PetN. The complex functions as a dimer. Heme serves as cofactor.

It is found in the cellular thylakoid membrane. Its function is as follows. Component of the cytochrome b6-f complex, which mediates electron transfer between photosystem II (PSII) and photosystem I (PSI), cyclic electron flow around PSI, and state transitions. The chain is Cytochrome f from Prochlorococcus marinus (strain SARG / CCMP1375 / SS120).